The sequence spans 382 residues: MEVNYERLRGSYNDYRKLELGLGEFGDDFVGLPDDPFCMNIRSTLNSISDWFHENQIGLVSEDHTLPEDPFCMRVRSTLNTISDWFHENQKEIGVVDQMLFETLSWFYNNDDDDGDDDDDGGGGGEAHDAFELVLPYLELKEILAVEVVCRSLRDSVGKEPFFWTSIDLNDSFLQYRVTDESLLKLTRRALGGVRCLNLGGCVGITDYGLKQVLASNPHLTKLSVSGCLRLSTAGLVSTLRDLKSSNRLGVKSLITGGALYFTKEQFKELNLLLGGDAKVGLQERKKRFYTSCRSEFYLEDDRVTDLEICPWCEKPSLVFDCPADTCPLKGQYPYSKSSCRACVVCIERCHECGSCLNDCENKPFCFAFSCVVCIEKRSNRL.

The F-box domain occupies 16 to 105; the sequence is RKLELGLGEF…VDQMLFETLS (90 aa).

The sequence is that of F-box protein At3g27290 from Arabidopsis thaliana (Mouse-ear cress).